A 273-amino-acid chain; its full sequence is Putative deoxyribonuclease TATDN1 homolog (273 aa).

4 residues coordinate a divalent metal cation: Glu91, His125, His147, and Asp195.

The protein belongs to the metallo-dependent hydrolases superfamily. TatD-type hydrolase family. Requires a divalent metal cation as cofactor.

The protein localises to the nucleus. Functionally, putative deoxyribonuclease. In Encephalitozoon cuniculi (strain GB-M1) (Microsporidian parasite), this protein is Putative deoxyribonuclease TATDN1 homolog.